The primary structure comprises 259 residues: Hydroxyethylthiazole kinase (259 aa).

Methionine 37 is a substrate binding site. The ATP site is built by arginine 113 and threonine 158. Residue glycine 185 participates in substrate binding.

The protein belongs to the Thz kinase family. Mg(2+) is required as a cofactor.

It catalyses the reaction 5-(2-hydroxyethyl)-4-methylthiazole + ATP = 4-methyl-5-(2-phosphooxyethyl)-thiazole + ADP + H(+). It participates in cofactor biosynthesis; thiamine diphosphate biosynthesis; 4-methyl-5-(2-phosphoethyl)-thiazole from 5-(2-hydroxyethyl)-4-methylthiazole: step 1/1. Functionally, catalyzes the phosphorylation of the hydroxyl group of 4-methyl-5-beta-hydroxyethylthiazole (THZ). The sequence is that of Hydroxyethylthiazole kinase from Helicobacter pylori (strain Shi470).